Reading from the N-terminus, the 465-residue chain is Neuraminidase (465 aa).

At 1-11 (MLPSTIQTLTL) the chain is on the intravirion side. Residues 12-34 (FLTSGGVLLSLYVSASLSYLLYS) form a helical membrane-spanning segment. An involved in apical transport and lipid raft association region spans residues 13–35 (LTSGGVLLSLYVSASLSYLLYSD). Residues 35–465 (DILLKFSSKI…DTVTGVDMAL (431 aa)) lie on the Virion surface side of the membrane. The tract at residues 38-85 (LKFSSKITAPTMTLDCANASNVQAVNRSATKEMTFLLPEPEWTYPRLS) is hypervariable stalk region. 2 N-linked (GlcNAc...) asparagine; by host glycosylation sites follow: Asn55 and Asn63. Disulfide bonds link Cys86/Cys419, Cys121/Cys126, Cys181/Cys228, Cys230/Cys235, Cys276/Cys290, Cys278/Cys288, Cys317/Cys336, and Cys423/Cys446. A head of neuraminidase region spans residues 88–465 (GSTFQKALLI…DTVTGVDMAL (378 aa)). Arg115 contacts substrate. Asn143 carries N-linked (GlcNAc...) asparagine; by host glycosylation. Residue Asp148 is the Proton donor/acceptor of the active site. A substrate-binding site is contributed by Arg149. 274-275 (EE) lines the substrate pocket. N-linked (GlcNAc...) asparagine; by host glycosylation occurs at Asn283. Arg291 serves as a coordination point for substrate. Residues Asp292, Thr296, Asp323, Gly343, and Gly345 each contribute to the Ca(2+) site. Arg373 is a binding site for substrate. The active-site Nucleophile is the Tyr408.

This sequence belongs to the glycosyl hydrolase 34 family. As to quaternary structure, homotetramer. Requires Ca(2+) as cofactor. N-glycosylated.

It localises to the virion membrane. It is found in the host apical cell membrane. The enzyme catalyses Hydrolysis of alpha-(2-&gt;3)-, alpha-(2-&gt;6)-, alpha-(2-&gt;8)- glycosidic linkages of terminal sialic acid residues in oligosaccharides, glycoproteins, glycolipids, colominic acid and synthetic substrates.. Its activity is regulated as follows. Inhibited by the neuraminidase inhibitors zanamivir (Relenza) and oseltamivir (Tamiflu). These drugs interfere with the release of progeny virus from infected cells and are effective against all influenza strains. Resistance to neuraminidase inhibitors is quite rare. Its function is as follows. Catalyzes the removal of terminal sialic acid residues from viral and cellular glycoconjugates. Cleaves off the terminal sialic acids on the glycosylated HA during virus budding to facilitate virus release. Additionally helps virus spread through the circulation by further removing sialic acids from the cell surface. These cleavages prevent self-aggregation and ensure the efficient spread of the progeny virus from cell to cell. Otherwise, infection would be limited to one round of replication. Described as a receptor-destroying enzyme because it cleaves a terminal sialic acid from the cellular receptors. May facilitate viral invasion of the upper airways by cleaving the sialic acid moieties on the mucin of the airway epithelial cells. Likely to plays a role in the budding process through its association with lipid rafts during intracellular transport. May additionally display a raft-association independent effect on budding. Plays a role in the determination of host range restriction on replication and virulence. Sialidase activity in late endosome/lysosome traffic seems to enhance virus replication. In Influenza B virus (strain B/Beijing/1/1987), this protein is Neuraminidase.